We begin with the raw amino-acid sequence, 318 residues long: Malate dehydrogenase (318 aa).

NAD(+)-binding positions include Gly10 to Gly15 and Asp34. Substrate-binding residues include Arg83 and Arg89. NAD(+)-binding positions include Asn96 and Ile119–Asn121. Asn121 and Arg152 together coordinate substrate. His176 (proton acceptor) is an active-site residue.

It belongs to the LDH/MDH superfamily. MDH type 3 family.

It catalyses the reaction (S)-malate + NAD(+) = oxaloacetate + NADH + H(+). Functionally, catalyzes the reversible oxidation of malate to oxaloacetate. The sequence is that of Malate dehydrogenase from Geotalea daltonii (strain DSM 22248 / JCM 15807 / FRC-32) (Geobacter daltonii).